A 1392-amino-acid polypeptide reads, in one-letter code: DNA-directed RNA polymerase subunit beta (1392 aa).

This sequence belongs to the RNA polymerase beta chain family. As to quaternary structure, the RNAP catalytic core consists of 2 alpha, 1 beta, 1 beta' and 1 omega subunit. When a sigma factor is associated with the core the holoenzyme is formed, which can initiate transcription.

It carries out the reaction RNA(n) + a ribonucleoside 5'-triphosphate = RNA(n+1) + diphosphate. DNA-dependent RNA polymerase catalyzes the transcription of DNA into RNA using the four ribonucleoside triphosphates as substrates. The sequence is that of DNA-directed RNA polymerase subunit beta from Neisseria gonorrhoeae (strain ATCC 700825 / FA 1090).